The chain runs to 283 residues: Lactoylglutathione lyase GLX1 (283 aa).

At Ala-2 the chain carries N-acetylalanine. VOC domains are found at residues 17–141 (RFLH…LIQR) and 147–275 (PFCQ…LVDN). A Zn(2+)-binding site is contributed by His-20. Arg-24 serves as a coordination point for substrate. Glu-71 serves as a coordination point for Zn(2+). Substrate-binding residues include Asn-75 and His-89. Zn(2+) contacts are provided by His-89, Glu-137, and Gln-150. Catalysis depends on Glu-137, which acts as the Proton donor/acceptor. Gln-150 and Arg-154 together coordinate substrate. Position 150 (Gln-150) interacts with a divalent metal cation. Position 201 (Glu-201) interacts with Zn(2+). Glu-201 serves as a coordination point for a divalent metal cation. Asn-205 contacts substrate. Position 219 (Gln-219) interacts with a divalent metal cation. Residue 251-252 (PL) coordinates substrate. Val-271 serves as a coordination point for a divalent metal cation.

It belongs to the glyoxalase I family. Homodimer. Requires Zn(2+) as cofactor. Post-translationally, phosphorylated by SnRK2.8.

The enzyme catalyses (R)-S-lactoylglutathione = methylglyoxal + glutathione. It participates in secondary metabolite metabolism; methylglyoxal degradation; (R)-lactate from methylglyoxal: step 1/2. Functionally, catalyzes the conversion of hemimercaptal, formed from methylglyoxal and glutathione, to S-lactoylglutathione. The protein is Lactoylglutathione lyase GLX1 of Arabidopsis thaliana (Mouse-ear cress).